The chain runs to 261 residues: MEYFDAHCHLNCEPLLEQHEKSLANFRLIGLKANVVGTNLTNSQIAVNLAKQHPDLLKAGVGIHPNDVQLFDLKAAQATLKKLVSTHRSFISCIGEYGFDYHYTKDYITQQEQFFLMQFQLAEQYQLVHMLHVRDVHERIYEVLKRLKPKQPVVFHCFSEDTNTALKLLTLREVGLKVYFSIPGIVTFKNAKNLQAALSVIPTELLLSETDSPYLAPVPFRGKTNWPECVVHTVQTIADIKQVPLAEIKQAIVHNAKKLFW.

The a divalent metal cation site is built by H7, H9, E96, H132, H156, and D211.

It belongs to the metallo-dependent hydrolases superfamily. TatD-type hydrolase family. A divalent metal cation serves as cofactor.

This is an uncharacterized protein from Mycoplasma pneumoniae (strain ATCC 29342 / M129 / Subtype 1) (Mycoplasmoides pneumoniae).